A 381-amino-acid chain; its full sequence is MFEMYIESGMNKLRCGYTTGSCATGAAKAATMLLFDLINSEEELNEIEIDTPKGIKVEMPIDHVVVGKNFVQCTILKFSGDDKDITMGLEIQATVEKISKEEAEELSKKLISNESKIIVLDGGIGVGRVTKDGLFVAKGEPAINPVPRQMIIKEIESILPKDKYVKVIISVPQGTEIGKKTFNPRLGIEGGISILGTSGIVYPMSEDALKASIKLEIKQKSLKNKNLILTFGNLGENYCKSLGYIEEEIIICSNFIGFALECCVSCKVKSILIVGHIGKMSKIAYGCFNTHSRVCGVRLEVLALELTLLGYDVSLVNKVLNEKTCEGAVKLLGSGYENLYKNIGKKILNSMKTYVYDELKIDAVMYYGASNPILLWSSCLE.

Belongs to the CbiD family.

It catalyses the reaction Co-precorrin-5B + S-adenosyl-L-methionine = Co-precorrin-6A + S-adenosyl-L-homocysteine. It functions in the pathway cofactor biosynthesis; adenosylcobalamin biosynthesis; cob(II)yrinate a,c-diamide from sirohydrochlorin (anaerobic route): step 6/10. In terms of biological role, catalyzes the methylation of C-1 in cobalt-precorrin-5B to form cobalt-precorrin-6A. The chain is Cobalt-precorrin-5B C(1)-methyltransferase from Clostridium botulinum (strain Eklund 17B / Type B).